Consider the following 437-residue polypeptide: MTHYHFVGIKGSGMSSLAQIMHDLGHEVQGSDIDQYVFTEKALRNKGIKILPFNPDNIEKGMTIIQGNAFSDTHEEIVRAHELDLEVIDYPTFLGHVIEQYISIAVTGAHGKTSTTGLLSHVMNGDKRTSFLIGDGTGLGIPQSEFFAFEACEYRRHFLSYHPDYAIMTNIDFDHPDYFKDVDDVTNAFQEMAYNVKKGIVAWGKDEHLRKIKADVPIYYYGLEKNEDIYADNIQITEHGTQFDVYIDGKYFDQFLSPQYGDHNILNTLAVIMVCHLEGLDIENIKEALETFGGVKRRFNETKLHNQVLVDDYAHHPREINATIETARKKYPNKEVIAVFQPHTFSRTKAFLEEFAESLSKADRVFLCDIFGSIREHDGSLTIQDLIDRIPGAQLIGENNVNILNEFDNAVILFMGAGDIQKIERAYMENNGVTNEF.

Position 108–114 (108–114 (GAHGKTS)) interacts with ATP.

It belongs to the MurCDEF family.

The protein localises to the cytoplasm. The enzyme catalyses UDP-N-acetyl-alpha-D-muramate + L-alanine + ATP = UDP-N-acetyl-alpha-D-muramoyl-L-alanine + ADP + phosphate + H(+). The protein operates within cell wall biogenesis; peptidoglycan biosynthesis. Functionally, cell wall formation. This is UDP-N-acetylmuramate--L-alanine ligase from Staphylococcus carnosus (strain TM300).